The following is a 217-amino-acid chain: MLO-like protein (217 aa).

3 consecutive transmembrane segments (helical) span residues 35-55 (FKVV…FLLS), 59-79 (GWVA…VVGT), and 119-139 (LVLF…AFFI).

Belongs to the MLO family.

It is found in the membrane. Its function is as follows. May be involved in modulation of pathogen defense and leaf cell death. The sequence is that of MLO-like protein from Linum usitatissimum (Flax).